The following is a 355-amino-acid chain: Galectin-9 (355 aa).

Galectin domains follow at residues 17 to 148 (FTGM…ISFQ) and 227 to 355 (FFTS…HVQT). A beta-D-galactoside-binding positions include Asn-48, His-61, Arg-65, Asn-75, 82–88 (WGTEERK), His-267, Arg-271, Thr-281, and 287–293 (WGSEERS).

It localises to the cytoplasm. The protein localises to the nucleus. It is found in the secreted. Functionally, binds galactosides. Has high affinity for the Forssman pentasaccharide. Ligand for HAVCR2/TIM3. Binding to HAVCR2 induces T-helper type 1 lymphocyte (Th1) death. Also stimulates bactericidal activity in infected macrophages by causing macrophage activation and IL1B secretion which restricts intracellular bacterial growth. Ligand for P4HB; the interaction retains P4HB at the cell surface of Th2 T helper cells, increasing disulfide reductase activity at the plasma membrane, altering the plasma membrane redox state and enhancing cell migration. Ligand for CD44; the interaction enhances binding of SMAD3 to the FOXP3 promoter, leading to up-regulation of FOXP3 expression and increased induced regulatory T (iTreg) cell stability and suppressive function. Promotes ability of mesenchymal stromal cells to suppress T-cell proliferation. Expands regulatory T-cells and induces cytotoxic T-cell apoptosis following virus infection. Activates ERK1/2 phosphorylation inducing cytokine (IL-6, IL-8, IL-12) and chemokine (CCL2) production in mast and dendritic cells. Inhibits degranulation and induces apoptosis of mast cells. Induces maturation and migration of dendritic cells. Inhibits natural killer (NK) cell function. Can transform NK cell phenotype from peripheral to decidual during pregnancy. Astrocyte derived galectin-9 enhances microglial TNF production. May play a role in thymocyte-epithelial interactions relevant to the biology of the thymus. May provide the molecular basis for urate flux across cell membranes, allowing urate that is formed during purine metabolism to efflux from cells and serving as an electrogenic transporter that plays an important role in renal and gastrointestinal urate excretion. Highly selective to the anion urate. This is Galectin-9 (LGALS9) from Bos taurus (Bovine).